The following is a 142-amino-acid chain: MDQTLSDFGTVFVFLLLGIIFVVGGYLTARLLRPSRPNPEKLAIYECGEEAVGSAWVKFNIRFYVVALIFIIFDVEVVFLFPWATVFKQLGEFALIEALVFAGILVIGLVYAWVKGDLDWVRPTPNIPKMPVLEEDESQVVS.

The next 3 membrane-spanning stretches (helical) occupy residues 8–28, 63–83, and 93–113; these read FGTVFVFLLLGIIFVVGGYLT, FYVVALIFIIFDVEVVFLFPW, and FALIEALVFAGILVIGLVYAW.

The protein belongs to the complex I subunit 3 family. In terms of assembly, NDH-1 is composed of 14 different subunits. Subunits NuoA, H, J, K, L, M, N constitute the membrane sector of the complex.

It is found in the cell inner membrane. It catalyses the reaction a quinone + NADH + 5 H(+)(in) = a quinol + NAD(+) + 4 H(+)(out). Its function is as follows. NDH-1 shuttles electrons from NADH, via FMN and iron-sulfur (Fe-S) centers, to quinones in the respiratory chain. The immediate electron acceptor for the enzyme in this species is believed to be a menaquinone. Couples the redox reaction to proton translocation (for every two electrons transferred, four hydrogen ions are translocated across the cytoplasmic membrane), and thus conserves the redox energy in a proton gradient. In Chlorobium phaeobacteroides (strain BS1), this protein is NADH-quinone oxidoreductase subunit A.